The following is a 124-amino-acid chain: Aspartate 1-decarboxylase (124 aa).

Catalysis depends on serine 25, which acts as the Schiff-base intermediate with substrate; via pyruvic acid. Serine 25 carries the pyruvic acid (Ser) modification. Residue threonine 57 coordinates substrate. Tyrosine 58 acts as the Proton donor in catalysis. Substrate is bound at residue 73 to 75 (GAA).

It belongs to the PanD family. Heterooctamer of four alpha and four beta subunits. The cofactor is pyruvate. In terms of processing, is synthesized initially as an inactive proenzyme, which is activated by self-cleavage at a specific serine bond to produce a beta-subunit with a hydroxyl group at its C-terminus and an alpha-subunit with a pyruvoyl group at its N-terminus.

It is found in the cytoplasm. The enzyme catalyses L-aspartate + H(+) = beta-alanine + CO2. It functions in the pathway cofactor biosynthesis; (R)-pantothenate biosynthesis; beta-alanine from L-aspartate: step 1/1. Functionally, catalyzes the pyruvoyl-dependent decarboxylation of aspartate to produce beta-alanine. This is Aspartate 1-decarboxylase from Clostridium botulinum (strain Alaska E43 / Type E3).